Consider the following 172-residue polypeptide: Co-chaperone protein HscB homolog (172 aa).

Residues 2–74 (NHFELFGLVE…LRRAEYLLSL (73 aa)) form the J domain.

The protein belongs to the HscB family. In terms of assembly, interacts with HscA and stimulates its ATPase activity.

Functionally, co-chaperone involved in the maturation of iron-sulfur cluster-containing proteins. Seems to help targeting proteins to be folded toward HscA. This is Co-chaperone protein HscB homolog from Aeromonas salmonicida (strain A449).